Here is a 118-residue protein sequence, read N- to C-terminus: Ribosome-binding factor A (118 aa).

Belongs to the RbfA family. Monomer. Binds 30S ribosomal subunits, but not 50S ribosomal subunits or 70S ribosomes.

It is found in the cytoplasm. Functionally, one of several proteins that assist in the late maturation steps of the functional core of the 30S ribosomal subunit. Associates with free 30S ribosomal subunits (but not with 30S subunits that are part of 70S ribosomes or polysomes). Required for efficient processing of 16S rRNA. May interact with the 5'-terminal helix region of 16S rRNA. The protein is Ribosome-binding factor A of Bacillus cereus (strain ATCC 10987 / NRS 248).